The sequence spans 236 residues: Alpha-S2-casein (236 aa).

A signal peptide spans 1–15 (MKFFIFTCLLAVALA). 11 positions are modified to phosphoserine: Ser-23, Ser-24, Ser-25, Ser-28, Ser-47, Ser-80, Ser-81, Ser-82, Ser-85, Ser-157, and Ser-169. The segment at 72–93 (PTEVYSSSSSSEESAKFPTERE) is disordered. A compositionally biased stretch (basic and acidic residues) spans 84–93 (ESAKFPTERE).

Belongs to the alpha-casein family. In terms of processing, there are at least three different forms found in milk, with varying degrees of phosphorylation. These include form 10-P which is phosphorylated at ten sites that have not been determined, form 11-P which is phosphorylated at eleven sites and form 12-P which is phosphorylated at twelve sites. As to expression, mammary gland specific. Secreted in milk.

The protein localises to the secreted. Its function is as follows. Important role in the capacity of milk to transport calcium phosphate. This is Alpha-S2-casein from Equus asinus (Donkey).